The chain runs to 202 residues: Tetratricopeptide repeat protein 36 (202 aa).

TPR repeat units follow at residues 49 to 82 (AQDLERDGVKAAESEDMATAILKFSEAIALLPER), 83 to 116 (ASAYNNRAQALRLQGDVKGALEDLNQAVELSGIA), and 121 to 154 (RQALVQRGLILRLQGKDDEARKDFQRAAQLGSDF).

The protein belongs to the TTC36 family.

The protein is Tetratricopeptide repeat protein 36 (ttc36) of Xenopus tropicalis (Western clawed frog).